Consider the following 300-residue polypeptide: Probable low-salt glycan biosynthesis reductase Agl14 (300 aa).

NADH is bound by residues 10 to 12, 46 to 47, and 70 to 72; these read GLL, DI, and AYT. Residues 11 to 12, 46 to 47, 70 to 72, Y109, Y135, and K139 each bind NADPH; these read LL, DI, and AYT. Residues Y135 and K139 each contribute to the NADH site. Y135 serves as the catalytic Proton donor/acceptor.

This sequence belongs to the dTDP-4-dehydrorhamnose reductase family.

Its pathway is protein modification; protein glycosylation. It participates in cell surface structure biogenesis; S-layer biogenesis. Functionally, reductase involved in N-glycan biosynthetic pathway that takes place under low-salt conditions (1.75 M instead of 3.4 M). Participates in the formation of the tetrasaccharide present at 'Asn-532' of S-layer glycoprotein Csg, consisting of a sulfated hexose, 2 hexoses and rhamnose. Involved in the addition of final rhamnose (sugar 4) of the tetrasaccharide on the dolichol phosphate carrier. This chain is Probable low-salt glycan biosynthesis reductase Agl14 (agl14), found in Haloferax volcanii (strain ATCC 29605 / DSM 3757 / JCM 8879 / NBRC 14742 / NCIMB 2012 / VKM B-1768 / DS2) (Halobacterium volcanii).